We begin with the raw amino-acid sequence, 595 residues long: Sialic acid-binding Ig-like lectin 12 (595 aa).

A signal peptide spans 1–18 (MLLLLLLLPPLLCGRVGA). Ig-like V-type domains are found at residues 19–142 (KEQK…VNVT) and 143–269 (ASQD…VHVT). The Extracellular portion of the chain corresponds to 19-481 (KEQKDYLLTM…RPISGVTLGA (463 aa)). A disulfide bond links Cys44 and Cys104. Residues Asn140, Asn179, Asn230, and Asn290 are each glycosylated (N-linked (GlcNAc...) asparagine). 3 disulfides stabilise this stretch: Cys166–Cys299, Cys171–Cys231, and Cys293–Cys342. Residues 275–358 (PTFSIPGTLE…AGVTMTRAVR (84 aa)) form the Ig-like C2-type 1 domain. N-linked (GlcNAc...) asparagine glycans are attached at residues Asn360, Asn367, and Asn385. One can recognise an Ig-like C2-type 2 domain in the interval 365–462 (PQNLTMTVFQ…GSQHISLSLS (98 aa)). Residues Cys401 and Cys446 are joined by a disulfide bond. A helical membrane pass occupies residues 482 to 502 (FGGAGATALVFLYFCIIFVVV). Over 503 to 595 (RSCRKKSARP…YEYSEINIPK (93 aa)) the chain is Cytoplasmic. The disordered stretch occupies residues 512–560 (PAVGVGDTGMEDANAVRGSASQGPLIESPADDSPPHHAPPALATPSPEE). The ITIM motif signature appears at 563 to 568 (IQYASL). Residues Tyr565 and Tyr588 each carry the phosphotyrosine modification. The SLAM-like motif motif lies at 586-591 (YEYSEI).

This sequence belongs to the immunoglobulin superfamily. SIGLEC (sialic acid binding Ig-like lectin) family. As to expression, isoform Short is highly expressed in spleen, small intestine and adrenal gland; it is lower expressed in thyroid, placenta, brain, stomach, bone marrow, spinal cord and breast. Isoform Long is highly expressed in spleen, small intestine and bone marrow; it is lower expressed in thyroid, placenta, thymus, trachea, stomach, lung, adrenal gland, fetal brain and testis.

The protein resides in the membrane. In terms of biological role, putative adhesion molecule that mediates sialic-acid dependent binding to cells. The sialic acid recognition site may be masked by cis interactions with sialic acids on the same cell surface. This Homo sapiens (Human) protein is Sialic acid-binding Ig-like lectin 12 (SIGLEC12).